Consider the following 218-residue polypeptide: Small ribosomal subunit protein uS3c (218 aa).

The 80-residue stretch at Ile-39 to Ala-118 folds into the KH type-2 domain.

It belongs to the universal ribosomal protein uS3 family. Part of the 30S ribosomal subunit.

The protein resides in the plastid. It localises to the chloroplast. In Ipomoea purpurea (Common morning glory), this protein is Small ribosomal subunit protein uS3c (rps3).